The following is a 100-amino-acid chain: Urease subunit gamma (100 aa).

The protein belongs to the urease gamma subunit family. As to quaternary structure, heterotrimer of UreA (gamma), UreB (beta) and UreC (alpha) subunits. Three heterotrimers associate to form the active enzyme.

It is found in the cytoplasm. It carries out the reaction urea + 2 H2O + H(+) = hydrogencarbonate + 2 NH4(+). It functions in the pathway nitrogen metabolism; urea degradation; CO(2) and NH(3) from urea (urease route): step 1/1. This Flavobacterium johnsoniae (strain ATCC 17061 / DSM 2064 / JCM 8514 / BCRC 14874 / CCUG 350202 / NBRC 14942 / NCIMB 11054 / UW101) (Cytophaga johnsonae) protein is Urease subunit gamma.